The sequence spans 287 residues: Chlorophyll a-b binding protein CP29.2, chloroplastic (287 aa).

A chloroplast-targeting transit peptide spans 1-31 (MAATSTAAAASSIMGTRVVSDISSNSSRFTA). N2-acetylarginine is present on Arg32. Thr37 carries the phosphothreonine modification. Trp55 serves as a coordination point for chlorophyll b. Phe75 is a binding site for chlorophyll a. Residues Thr109 and Thr111 each carry the phosphothreonine modification. Chlorophyll a-binding residues include Glu137 and His140. Residues 143-163 (WAMLATLGAITVEWLTGVTWQ) traverse the membrane as a helical segment. Leu177 contributes to the chlorophyll a binding site. A helical membrane pass occupies residues 181–201 (LPFSISTLIWIEVLVIGYIEF). Chlorophyll b contacts are provided by Glu200 and Arg203. Chlorophyll a contacts are provided by Glu239, His242, Arg244, Gln256, and His271. A helical membrane pass occupies residues 245 to 265 (LAMVGFLGFAVQAAATGKGPL).

The protein belongs to the light-harvesting chlorophyll a/b-binding (LHC) protein family. In terms of assembly, the LHC complex consists of chlorophyll a-b binding proteins. Requires Binds at least 14 chlorophylls (8 Chl-a and 6 Chl-b) and carotenoids such as lutein and neoxanthin. as cofactor. Post-translationally, photoregulated by reversible phosphorylation of its threonine residues.

Its subcellular location is the plastid. It localises to the chloroplast thylakoid membrane. Functionally, the light-harvesting complex (LHC) functions as a light receptor, it captures and delivers excitation energy to photosystems with which it is closely associated. The sequence is that of Chlorophyll a-b binding protein CP29.2, chloroplastic (LHCB4.2) from Arabidopsis thaliana (Mouse-ear cress).